The sequence spans 114 residues: NADH-ubiquinone oxidoreductase chain 3 (114 aa).

The next 3 membrane-spanning stretches (helical) occupy residues 3 to 23, 54 to 74, and 85 to 105; these read ATIL…SFWL, FFLI…LLPF, and IVIL…IYEW.

The protein belongs to the complex I subunit 3 family.

The protein resides in the mitochondrion membrane. The enzyme catalyses a ubiquinone + NADH + 5 H(+)(in) = a ubiquinol + NAD(+) + 4 H(+)(out). Its function is as follows. Core subunit of the mitochondrial membrane respiratory chain NADH dehydrogenase (Complex I) that is believed to belong to the minimal assembly required for catalysis. Complex I functions in the transfer of electrons from NADH to the respiratory chain. The immediate electron acceptor for the enzyme is believed to be ubiquinone. This is NADH-ubiquinone oxidoreductase chain 3 (mt-nd3) from Xenopus laevis (African clawed frog).